A 486-amino-acid chain; its full sequence is Amyloid-beta A4 precursor protein-binding family B member 3 (486 aa).

The region spanning 29–61 (TGLPPGWRKIRDAAGTYYWHVPSGSTQWQRPTW) is the WW domain. PID domains are found at residues 113 to 280 (EPGA…QVEL) and 285 to 440 (SQAA…RTSS). The segment at 438 to 460 (TSSMDSPGGPLPPPLLKGGAGGA) is disordered.

In terms of assembly, interacts with APP (via intracellular domain). Interacts with APLP1 and APLP2 (via intracellular domain).

It localises to the cytoplasm. The protein resides in the nucleus. May modulate the internalization of amyloid-beta precursor protein. This chain is Amyloid-beta A4 precursor protein-binding family B member 3, found in Mus musculus (Mouse).